We begin with the raw amino-acid sequence, 268 residues long: Glutamine amidotransferase-like class 1 domain-containing protein 3, mitochondrial (268 aa).

A mitochondrion-targeting transit peptide spans 1-41 (MAAVRVLVASRLAAASAFTSLSPGGRTPSQRAALHLSVPRP). 3 positions are modified to N6-acetyllysine: Lys-151, Lys-157, and Lys-164. Position 203 is an N6-acetyllysine; alternate (Lys-203). Lys-203 is modified (N6-succinyllysine; alternate). Lys-219 bears the N6-acetyllysine mark. 2 positions are modified to N6-acetyllysine; alternate: Lys-223 and Lys-233. An N6-succinyllysine; alternate mark is found at Lys-223 and Lys-233.

Belongs to the GATD3 family.

It localises to the mitochondrion. The chain is Glutamine amidotransferase-like class 1 domain-containing protein 3, mitochondrial from Homo sapiens (Human).